The sequence spans 444 residues: Argininosuccinate synthase (444 aa).

Residues 18–26 and alanine 44 each bind ATP; that span reads AFSGGLDTS. Position 100 (tyrosine 100) interacts with L-citrulline. Residues glycine 130 and threonine 132 each coordinate ATP. Positions 132, 136, and 137 each coordinate L-aspartate. Asparagine 136 serves as a coordination point for L-citrulline. Aspartate 137 is an ATP binding site. Arginine 140 and serine 193 together coordinate L-citrulline. Aspartate 195 is an ATP binding site. Residues threonine 202, glutamate 204, and glutamate 281 each coordinate L-citrulline.

This sequence belongs to the argininosuccinate synthase family. Type 2 subfamily. Homotetramer.

It localises to the cytoplasm. It carries out the reaction L-citrulline + L-aspartate + ATP = 2-(N(omega)-L-arginino)succinate + AMP + diphosphate + H(+). It participates in amino-acid biosynthesis; L-arginine biosynthesis; L-arginine from L-ornithine and carbamoyl phosphate: step 2/3. The chain is Argininosuccinate synthase from Actinobacillus succinogenes (strain ATCC 55618 / DSM 22257 / CCUG 43843 / 130Z).